Reading from the N-terminus, the 293-residue chain is Movement protein BC1 (293 aa).

It belongs to the begomovirus movement protein BC1 family. As to quaternary structure, binds to dimeric supercoiled plasmid DNA. In terms of processing, phosphorylated.

The protein localises to the host cell membrane. The protein resides in the host microsome membrane. It is found in the host endoplasmic reticulum membrane. Its function is as follows. Transports viral genome to neighboring plant cells directly through plasmosdesmata, without any budding. The movement protein allows efficient cell to cell propagation, by bypassing the host cell wall barrier. Begomovirus genome is shuttled out of nucleus by Nuclear shuttle protein (NSP) and the movement protein transports the DNA-NSP complex to cell plasmodesmata and facilitates further movement across the cell wall. The sequence is that of Movement protein BC1 from Cucurbita moschata (Winter crookneck squash).